The following is a 278-amino-acid chain: Asnovolin E/Chermesin D methyltransferase nvfJ (278 aa).

S-adenosyl-L-methionine-binding positions include 125–126, 152–153, and 153–154; these read DL, NI, and IL.

Belongs to the class I-like SAM-binding methyltransferase superfamily. As to quaternary structure, homodimer.

It catalyses the reaction chermesin D + S-adenosyl-L-methionine = chermesin D methyl ester + S-adenosyl-L-homocysteine. The catalysed reaction is asnovolin I + S-adenosyl-L-methionine = asnovolin K + S-adenosyl-L-homocysteine. It participates in secondary metabolite biosynthesis; terpenoid biosynthesis. In terms of biological role, methyltransferase; part of the gene cluster that mediates the biosynthesis of novofumigatonin, a heavily oxygenated meroterpenoid containing a unique orthoester moiety. The first step of the pathway is the synthesis of 3,5-dimethylorsellinic acid (DMOA) by the polyketide synthase nvfA via condensation of one acetyl-CoA starter unit with 3 malonyl-CoA units and 2 methylations. DMOA is then converted to farnesyl-DMOA by the farnesyltransferase nvfB. Epoxydation by FAD-dependent monooxygenase nvfK, followed by a protonation-initiated cyclization catalyzed by the terpene cyclase nvfL leads to the production of asnavolin H. The short chain dehydrogenase nvfC then as a 3-OH dehydrogenase of asnovolin H to yield chemesin D. There are two branches to synthesize asnovolin A from chemesin D. In one branch, chemesin D undergoes Baeyer-Villiger oxidation by nvfH, methylation by nvfJ, and enoyl reduction by the nvfM D enoylreductase that reduces the double bond between C-5'and C-6', to form respectively asnovolin I, asnovolin K, and asnovolin A. In the other branch, the methylation precedes the Baeyer-Villiger oxidation and the enoyl reduction to yield asnovolin A via the asnovolin J intermediate. Asnovolin A is further converted to fumigatonoid A by the Fe(II)/2-oxoglutarate-dependent dioxygenase nvfI that catalyzes an endoperoxidation reaction. The alpha/beta hydrolase nvfD then acts as an epimerase that converts fumigatonoid A to its C-5' epimer, which then undergoes spontaneous or nvfD-catalyzed lactonization. The following step utilizes the ketoreductase nvfG to produce fumigatonoid B. The dioxygenase nvfE further converts fumigatonoid B into fumigatonoid C. Finally the Fe(II)/2-oxoglutarate-dependent dioxygenase nvfF catalyzes two rounds of oxidation to transform fumigatonoid C into the end product, novofumigatonin A. In Aspergillus novofumigatus (strain IBT 16806), this protein is Asnovolin E/Chermesin D methyltransferase nvfJ.